The following is a 63-amino-acid chain: Large ribosomal subunit protein uL29 (63 aa).

It belongs to the universal ribosomal protein uL29 family.

The protein is Large ribosomal subunit protein uL29 of Baumannia cicadellinicola subsp. Homalodisca coagulata.